The following is a 253-amino-acid chain: tRNA pseudouridine synthase A (253 aa).

D53 functions as the Nucleophile in the catalytic mechanism. A substrate-binding site is contributed by Y111.

It belongs to the tRNA pseudouridine synthase TruA family. As to quaternary structure, homodimer.

The catalysed reaction is uridine(38/39/40) in tRNA = pseudouridine(38/39/40) in tRNA. In terms of biological role, formation of pseudouridine at positions 38, 39 and 40 in the anticodon stem and loop of transfer RNAs. The chain is tRNA pseudouridine synthase A from Chlorobium luteolum (strain DSM 273 / BCRC 81028 / 2530) (Pelodictyon luteolum).